A 540-amino-acid polypeptide reads, in one-letter code: Putative cysteine ligase BshC (540 aa).

Residues 457–477 (EKNRAFIQGQIAFLKERMERE) adopt a coiled-coil conformation.

This sequence belongs to the BshC family.

Its function is as follows. Involved in bacillithiol (BSH) biosynthesis. May catalyze the last step of the pathway, the addition of cysteine to glucosamine malate (GlcN-Mal) to generate BSH. The chain is Putative cysteine ligase BshC from Shouchella clausii (strain KSM-K16) (Alkalihalobacillus clausii).